A 223-amino-acid polypeptide reads, in one-letter code: Small ribosomal subunit protein uS3 (223 aa).

One can recognise a KH type-2 domain in the interval 39-117 (IREHLRKKPS…RPELNAKLVA (79 aa)).

It belongs to the universal ribosomal protein uS3 family. As to quaternary structure, part of the 30S ribosomal subunit. Forms a tight complex with proteins S10 and S14.

Binds the lower part of the 30S subunit head. Binds mRNA in the 70S ribosome, positioning it for translation. In Chlamydia caviae (strain ATCC VR-813 / DSM 19441 / 03DC25 / GPIC) (Chlamydophila caviae), this protein is Small ribosomal subunit protein uS3.